We begin with the raw amino-acid sequence, 440 residues long: Thymidine phosphorylase (440 aa).

Belongs to the thymidine/pyrimidine-nucleoside phosphorylase family. As to quaternary structure, homodimer.

The catalysed reaction is thymidine + phosphate = 2-deoxy-alpha-D-ribose 1-phosphate + thymine. Its pathway is pyrimidine metabolism; dTMP biosynthesis via salvage pathway; dTMP from thymine: step 1/2. The enzymes which catalyze the reversible phosphorolysis of pyrimidine nucleosides are involved in the degradation of these compounds and in their utilization as carbon and energy sources, or in the rescue of pyrimidine bases for nucleotide synthesis. This Salmonella heidelberg (strain SL476) protein is Thymidine phosphorylase.